A 742-amino-acid polypeptide reads, in one-letter code: UPF0313 protein MA_4618 (742 aa).

The interval 1–125 (MGVRKQTMVK…SFSSSLPASK (125 aa)) is disordered. The segment at 1 to 128 (MGVRKQTMVK…SSLPASKFLP (128 aa)) is unknown. Basic and acidic residues-rich tracts occupy residues 17–40 (ENKK…ERAG) and 49–73 (KKVE…KAEG). The span at 106–115 (TGKKEKKQKK) shows a compositional bias: basic residues. Residues 129–742 (MSPEEVKARG…KCLIRRKEKQ (614 aa)) form a UPF0313 region. The region spanning 438-707 (ALEMVKFSLT…AMQRALMHYR (270 aa)) is the Radical SAM core domain. [4Fe-4S] cluster contacts are provided by Cys-452, Cys-456, and Cys-459.

It in the C-terminal section; belongs to the UPF0313 family. [4Fe-4S] cluster is required as a cofactor.

This is UPF0313 protein MA_4618 from Methanosarcina acetivorans (strain ATCC 35395 / DSM 2834 / JCM 12185 / C2A).